A 342-amino-acid chain; its full sequence is Dihydroorotase (342 aa).

Residues His13 and His15 each coordinate Zn(2+). Residues 15–17 and Asn41 contribute to the substrate site; that span reads HLR. 3 residues coordinate Zn(2+): Lys98, His135, and His173. Lys98 is modified (N6-carboxylysine). His135 provides a ligand contact to substrate. Leu218 contributes to the substrate binding site. Residue Asp246 participates in Zn(2+) binding. The active site involves Asp246. Residues His250 and Ala262 each contribute to the substrate site.

Belongs to the metallo-dependent hydrolases superfamily. DHOase family. Class II DHOase subfamily. As to quaternary structure, homodimer. Zn(2+) is required as a cofactor.

The catalysed reaction is (S)-dihydroorotate + H2O = N-carbamoyl-L-aspartate + H(+). Its pathway is pyrimidine metabolism; UMP biosynthesis via de novo pathway; (S)-dihydroorotate from bicarbonate: step 3/3. Catalyzes the reversible cyclization of carbamoyl aspartate to dihydroorotate. The polypeptide is Dihydroorotase (Aliivibrio fischeri (strain MJ11) (Vibrio fischeri)).